We begin with the raw amino-acid sequence, 115 residues long: MYAIIKTGGKQYRVTEGQMLKVEKLAQDVGQSVKFDDVLMVAAGDELHIGTPSVKDAAVTAEVVDQGRQAKIEIIKFKRRKHHMKRQGHRQDFTAVKVTEIALGKAKKEVKTDGA.

It belongs to the bacterial ribosomal protein bL21 family. As to quaternary structure, part of the 50S ribosomal subunit. Contacts protein L20.

This protein binds to 23S rRNA in the presence of protein L20. In Coxiella burnetii (strain Dugway 5J108-111), this protein is Large ribosomal subunit protein bL21.